A 218-amino-acid chain; its full sequence is Large ribosomal subunit protein uL4 (218 aa).

The interval 55–83 is disordered; it reads THATKTRGMVSGGGKKPWKQKGTGRARQG.

The protein belongs to the universal ribosomal protein uL4 family. Part of the 50S ribosomal subunit.

One of the primary rRNA binding proteins, this protein initially binds near the 5'-end of the 23S rRNA. It is important during the early stages of 50S assembly. It makes multiple contacts with different domains of the 23S rRNA in the assembled 50S subunit and ribosome. Functionally, forms part of the polypeptide exit tunnel. The chain is Large ribosomal subunit protein uL4 from Bifidobacterium longum (strain DJO10A).